A 909-amino-acid chain; its full sequence is Protein translocase subunit SecA (909 aa).

ATP-binding positions include glutamine 87, 105–109, and aspartate 513; that span reads GEGKT. Residues 834–909 are disordered; it reads QEEVERMEEQ…KYKQCHGKID (76 aa). Positions 836 to 853 are enriched in basic and acidic residues; the sequence is EVERMEEQRRAQAEEAAR. The segment covering 854 to 863 has biased composition (low complexity); sequence RAQAQHAAAQ. The span at 874–889 shows a compositional bias: basic and acidic residues; that stretch reads EGAHQPMVREERKVGR. Zn(2+) contacts are provided by cysteine 893, cysteine 895, cysteine 904, and histidine 905. Positions 899–909 are enriched in basic residues; the sequence is KKYKQCHGKID.

The protein belongs to the SecA family. As to quaternary structure, monomer and homodimer. Part of the essential Sec protein translocation apparatus which comprises SecA, SecYEG and auxiliary proteins SecDF-YajC and YidC. The cofactor is Zn(2+).

The protein resides in the cell inner membrane. The protein localises to the cytoplasm. It catalyses the reaction ATP + H2O + cellular proteinSide 1 = ADP + phosphate + cellular proteinSide 2.. In terms of biological role, part of the Sec protein translocase complex. Interacts with the SecYEG preprotein conducting channel. Has a central role in coupling the hydrolysis of ATP to the transfer of proteins into and across the cell membrane, serving both as a receptor for the preprotein-SecB complex and as an ATP-driven molecular motor driving the stepwise translocation of polypeptide chains across the membrane. The polypeptide is Protein translocase subunit SecA (Vibrio campbellii (strain ATCC BAA-1116)).